Consider the following 797-residue polypeptide: MPGAASIVAVLAALLPTALGQANQSYVDYNIEANPDLFSECLETGGTSFPDCESGPLSKTLVCDTSAKPHDRAAALVSLLTFEELVNNTANTGHGAPRIGLPAYQVWNEALHGVAHADFSDAGDFSWSTSFPQPISTMAALNRTLIHQIATIISTQGRAFMNAGRYGLDVYSPNINTFRHPVWGRGQETPGEDAYCLASTYAYEYITGIQGGVDANPLKLIATAKHYAGYDIENWDNHSRLGNDMQITQQDLAEYYTPQFLVASRDAKVHSVMCSYNAVNGVPSCSNSFFLQTLLRDTFDFVEDGYVSGDCGAVYNVFNPHGYATNESSAAADSIRAGTDIDCGVSYPRHFQESFHDQEVSRQDLERGVTRLYASLIRAGYFDGKTSPYRNITWSDVVSTNAQNLSYEAAAQSIVLLKNDGILPLTTSSSTKTIALIGPWANATTQMLGNYYGPAPYLISPLQAFQDSEYKITYTIGTNTTTDPDSTSQSTALTTAKEADLIIFAGGIDNTLETEAQDRSNITWPSNQLSLITKLADLGKPLIVLQMGGGQVDSSALKNNKNVNALIWGGYPGQSGGQALADIITGKRAPAARLVTTQYPAEYAEVFPAIDMNLRPNGSNPGQTYMWYTGTPVYEFGHGLFYTNFTASASAGSGTKNRTSFNIDEVLGRPHPGYKLVEQMPLLNFTVDVKNTGDRVSDYTAMAFVNTTAGPAPHPNKWLVGFDRLSAVEPGSAKTMVIPVTVDSLARTDEEGNRVLYPGRYEVALNNEREVVLGFTLTGEKAVLFKWPKEEQLIAPQ.

The N-terminal stretch at 1–20 (MPGAASIVAVLAALLPTALG) is a signal peptide. N-linked (GlcNAc...) asparagine glycosylation is found at N23, N87, N142, and N237. Residue D310 is part of the active site. Residues N326, N391, N404, N442, N479, N521, N617, N644, N657, N684, and N706 are each glycosylated (N-linked (GlcNAc...) asparagine).

It belongs to the glycosyl hydrolase 3 family.

The protein localises to the secreted. It carries out the reaction Hydrolysis of (1-&gt;4)-beta-D-xylans, to remove successive D-xylose residues from the non-reducing termini.. Its pathway is glycan degradation; xylan degradation. Xylan 1,4-beta-xylosidase involved in the hydrolysis of xylan, a major structural heterogeneous polysaccharide found in plant biomass representing the second most abundant polysaccharide in the biosphere, after cellulose. The polypeptide is Probable exo-1,4-beta-xylosidase xlnD (xlnD) (Aspergillus flavus (strain ATCC 200026 / FGSC A1120 / IAM 13836 / NRRL 3357 / JCM 12722 / SRRC 167)).